Reading from the N-terminus, the 375-residue chain is G-protein coupled estrogen receptor 1 (375 aa).

Position 1 is an N-acetylmethionine (M1). Over 1–62 (MAATTPAQDV…QQYVIALFLS (62 aa)) the chain is Extracellular. N32 and N44 each carry an N-linked (GlcNAc...) asparagine glycan. The helical transmembrane segment at 63–84 (CLYTIFLFPIGFVGNILILVVN) threads the bilayer. At 85–96 (ISFREKMTIPDL) the chain is on the cytoplasmic side. A helical membrane pass occupies residues 97 to 120 (YFINLAAADLILVADSLIEVFNLD). Residues 121–132 (EQYYDIAVLCTF) are Extracellular-facing. Residues C130 and C207 are joined by a disulfide bond. Residues 133–153 (MSLFLQINMYSSVFFLTWMSF) form a helical membrane-spanning segment. The Cytoplasmic portion of the chain corresponds to 154 to 175 (DRYLALAKAMRCGLFRTKHHAR). A helical membrane pass occupies residues 176–194 (LSCGLIWMASVSATLVPFT). The Extracellular segment spans residues 195 to 220 (AVHLRHTEEACFCFADVREVQWLEVT). The chain crosses the membrane as a helical span at residues 221–236 (LGFIVPFAIIGLCYSL). Over 237-259 (IVRALIRAHRHRGLRPRRQKALR) the chain is Cytoplasmic. The helical transmembrane segment at 260-280 (MIFAVVLVFFICWLPENVFIS) threads the bilayer. Topologically, residues 281-306 (VHLLQWAQPGDTPCKQSFRHAYPLTG) are extracellular. Residues 307–327 (HIVNLAAFSNSCLSPLIYSFL) traverse the membrane as a helical segment. The Cytoplasmic segment spans residues 328-375 (GETFRDKLRLYVAQKTSLPALNRFCHATLKAVIPDSTEQSDVKFSSAV).

Belongs to the G-protein coupled receptor 1 family. Homodimer. Heterodimer; heterodimerizes with other G-protein-coupled receptor (GPCRs) like CRHR1, HTR1A and PAQR8. Interacts with RAMP3; the interaction confers proper subcellular localization and function in cardioprotection. Interacts with KRT7 and KRT8. Interacts with EGFR; the interaction increases after agonist-induced stimulation in cancer-associated fibroblasts (CAF). Interacts with EGFR and ESR1. Interacts (via C-terminus tail motif) with DLG4 (via N-terminus tandem pair of PDZ domains); the interaction is direct and induces the increase of GPER1 protein levels residing at the plasma membrane surface in a estradiol-independent manner. Ubiquitinated; ubiquitination occurs at the plasma membrane and leads to proteasome-mediated degradation. In terms of processing, glycosylated. In terms of tissue distribution, expressed in the brain. Expressed in neurons of the hippocampus, hypothalamic paraventricular nucleus (PVN), supraoptic nucleus (SON) and the median eminence. Expressed in magnocellular neurosecretory cells (MNCs) which secrete oxytocin but not in MNCs which secrete vasopressin. Expressed in glial cells. Expressed in the nucleus ambiguous. Expressed in epithelial cells, in pachytene spermatocytes (PS) (at protein level). Expressed strongly in vascular endothelial cells and poorly in vascular smooth muscle cells (VSMC). Expressed in the brain, lung, pituitary gland, adrenal medulla, renal pelvis and ovary. Expressed in CA1 hippocampus. Expressed weakly in heart, skeletal muscle and kidney.

The protein resides in the nucleus. Its subcellular location is the cytoplasm. The protein localises to the perinuclear region. It is found in the cytoskeleton. It localises to the cytoplasmic vesicle membrane. The protein resides in the cell membrane. Its subcellular location is the basolateral cell membrane. The protein localises to the endoplasmic reticulum membrane. It is found in the early endosome. It localises to the recycling endosome. The protein resides in the golgi apparatus. Its subcellular location is the trans-Golgi network. The protein localises to the golgi apparatus membrane. It is found in the cell projection. It localises to the dendrite. The protein resides in the dendritic spine membrane. Its subcellular location is the axon. The protein localises to the postsynaptic density. It is found in the mitochondrion membrane. Functionally, G-protein coupled estrogen receptor that binds to 17-beta-estradiol (E2) with high affinity, leading to rapid and transient activation of numerous intracellular signaling pathways. Stimulates cAMP production, calcium mobilization and tyrosine kinase Src inducing the release of heparin-bound epidermal growth factor (HB-EGF) and subsequent transactivation of the epidermal growth factor receptor (EGFR), activating downstream signaling pathways such as PI3K/Akt and ERK/MAPK. Mediates pleiotropic functions among others in the cardiovascular, endocrine, reproductive, immune and central nervous systems. Has a role in cardioprotection by reducing cardiac hypertrophy and perivascular fibrosis in a RAMP3-dependent manner. Regulates arterial blood pressure by stimulating vasodilation and reducing vascular smooth muscle and microvascular endothelial cell proliferation. Plays a role in blood glucose homeostasis contributing to the insulin secretion response by pancreatic beta cells. Triggers mitochondrial apoptosis during pachytene spermatocyte differentiation. Stimulates uterine epithelial cell proliferation. Enhances uterine contractility in response to oxytocin. Contributes to thymic atrophy by inducing apoptosis. Attenuates TNF-mediated endothelial expression of leukocyte adhesion molecules. Promotes neuritogenesis in developing hippocampal neurons. Plays a role in acute neuroprotection against NMDA-induced excitotoxic neuronal death. Increases firing activity and intracellular calcium oscillations in luteinizing hormone-releasing hormone (LHRH) neurons. Inhibits early osteoblast proliferation at growth plate during skeletal development. Inhibits mature adipocyte differentiation and lipid accumulation. Involved in the recruitment of beta-arrestin 2 ARRB2 at the plasma membrane in epithelial cells. Also functions as a receptor for aldosterone mediating rapid regulation of vascular contractibility through the PI3K/ERK signaling pathway. Involved in cancer progression regulation. Stimulates cancer-associated fibroblast (CAF) proliferation by a rapid genomic response through the EGFR/ERK transduction pathway. Associated with EGFR, may act as a transcription factor activating growth regulatory genes (c-fos, cyclin D1). Promotes integrin alpha-5/beta-1 and fibronectin (FN) matrix assembly in breast cancer cells. The sequence is that of G-protein coupled estrogen receptor 1 (Gper1) from Rattus norvegicus (Rat).